The chain runs to 389 residues: Nicotinamide-nucleotide adenylyltransferase (389 aa).

Residues 380–383 (KKQK) carry the Nuclear localization signal motif.

This sequence belongs to the eukaryotic NMN adenylyltransferase family. As to expression, abundantly expressed in neuronal and muscle cells. Present at relatively low levels at the neuromuscular junction. Expressed in the eye; present in photoreceptor cells and various neurons in the lamina cortex and medulla cortex and at low levels in the lamina.

The protein resides in the nucleus. Its subcellular location is the cytoplasm. The protein localises to the presynaptic active zone. The enzyme catalyses beta-nicotinamide D-ribonucleotide + ATP + H(+) = diphosphate + NAD(+). It carries out the reaction nicotinate beta-D-ribonucleotide + ATP + H(+) = deamido-NAD(+) + diphosphate. It participates in cofactor biosynthesis; NAD(+) biosynthesis; NAD(+) from nicotinamide D-ribonucleotide: step 1/1. The protein operates within cofactor biosynthesis; NAD(+) biosynthesis; deamido-NAD(+) from nicotinate D-ribonucleotide: step 1/1. Its function is as follows. Catalyzes the formation of NAD(+) from nicotinamide mononucleotide (NMN) and ATP. Essential for viability. Stress-response chaperone protein that prevents toxic aggregation of proteins and promotes proteasome-mediated degradation of misfolded proteins; this is independent of its NAD(+) synthesis activity. Neuroprotective in response to toxic protein aggregation, for example by overexpressed Atx-1/ataxin-1. Required for maintenance and integrity of mature neurons, protecting them from neuronal activity-induced neurodegeneration. Required for the maintenance of axonal and dendritic integrity in both central and peripheral neurons. Chaperone function and neuroprotective roles are largely independent of NAD(+) synthesis activity. Functionally, catalyzes the formation of NAD(+) from nicotinamide mononucleotide (NMN) and ATP. Has, or stimulates, chaperone holdase activity but not refoldase activity. Does not have neuroprotective properties and may stimulate apoptosis and neurodegeneration in response to toxic protein aggregates. Catalyzes the formation of NAD(+) from nicotinamide mononucleotide (NMN) and ATP. Has, or stimulates, chaperone holdase and refoldase activity. Neuroprotective and reduces the toxic load of protein aggregates, preventing apoptosis and neurodegeneration. Promotes clearance of nuclear misfolded protein aggregates. The polypeptide is Nicotinamide-nucleotide adenylyltransferase (Drosophila melanogaster (Fruit fly)).